A 651-amino-acid chain; its full sequence is Probable endo-1,3(4)-beta-glucanase NFIA_089530 (651 aa).

The first 21 residues, 1–21 (MAPSSLFLSVGSLIASSLVSA), serve as a signal peptide directing secretion. The GH16 domain maps to 36–289 (ESWQGESFIN…WAGNVFAEST (254 aa)). Asn-64 carries an N-linked (GlcNAc...) asparagine glycan. Glu-145 functions as the Nucleophile in the catalytic mechanism. The active-site Proton donor is Glu-150. N-linked (GlcNAc...) asparagine glycosylation occurs at Asn-200. Positions 364 to 378 (PVPAETTAVPQPAQT) are enriched in low complexity. Disordered stretches follow at residues 364–422 (PVPA…ESTS) and 508–557 (SEIP…PVPA). Composition is skewed to polar residues over residues 379 to 400 (NTVA…TTVP) and 520 to 535 (QAVS…TAQG). The segment covering 542 to 557 (SIASASAAPSTIPVPA) has biased composition (low complexity). Asn-629 carries the GPI-anchor amidated asparagine lipid modification. The propeptide at 630–651 (GANRMSVGLSGLIGVMFIAALA) is removed in mature form.

It belongs to the glycosyl hydrolase 16 family.

It is found in the cell membrane. It carries out the reaction Endohydrolysis of (1-&gt;3)- or (1-&gt;4)-linkages in beta-D-glucans when the glucose residue whose reducing group is involved in the linkage to be hydrolyzed is itself substituted at C-3.. In terms of biological role, mixed-linked glucanase involved in the degradation of complex natural cellulosic substrates. This is Probable endo-1,3(4)-beta-glucanase NFIA_089530 from Neosartorya fischeri (strain ATCC 1020 / DSM 3700 / CBS 544.65 / FGSC A1164 / JCM 1740 / NRRL 181 / WB 181) (Aspergillus fischerianus).